A 590-amino-acid polypeptide reads, in one-letter code: Conglutin beta 4 (590 aa).

The first 30 residues, 1–30 (MIKMRVRFPTLVLLLGIVFLMAVSIGIAYG), serve as a signal peptide directing secretion. The span at 38-105 (HERPQEREQE…REPRREREQE (68 aa)) shows a compositional bias: basic and acidic residues. The tract at residues 38–175 (HERPQEREQE…DSRRQRNPYY (138 aa)) is disordered. The segment covering 137–146 (QGSSSSSRRQ) has biased composition (low complexity). Positions 174–332 (YYFSSERFQT…TFNTRYEEIQ (159 aa)) constitute a Cupin type-1 1 domain. The N-linked (GlcNAc...) asparagine glycan is linked to Asn-239. Disordered stretches follow at residues 340 to 362 (DEQEDDEQRHGQEQSHQDEGVIV) and 374 to 396 (KYAQSSSRKGKPSKSGPFNLRSN). Over residues 346 to 362 (EQRHGQEQSHQDEGVIV) the composition is skewed to basic and acidic residues. The Cupin type-1 2 domain maps to 391–548 (FNLRSNKPIY…TFPGSTEDVE (158 aa)). N-linked (GlcNAc...) asparagine glycosylation is present at Asn-498. Residues 559–579 (FANAQPQQQQQREREGRRGRR) are disordered.

Belongs to the 7S seed storage protein family. In terms of assembly, component of globulins complexes which accumulate in seeds.

Functionally, seed storage protein. Accumulates during seed development and is hydrolyzed after germination to provide a carbon and nitrogen source for the developing seedling. This is Conglutin beta 4 from Lupinus angustifolius (Narrow-leaved blue lupine).